Here is a 137-residue protein sequence, read N- to C-terminus: Small ribosomal subunit protein uS12 (137 aa).

Positions 1 to 26 (MPTINQLVTKGRKRKASKTKSPALNQ) are disordered.

Belongs to the universal ribosomal protein uS12 family. In terms of assembly, part of the 30S ribosomal subunit. Contacts proteins S8 and S17. May interact with IF1 in the 30S initiation complex.

Functionally, with S4 and S5 plays an important role in translational accuracy. Its function is as follows. Interacts with and stabilizes bases of the 16S rRNA that are involved in tRNA selection in the A site and with the mRNA backbone. Located at the interface of the 30S and 50S subunits, it traverses the body of the 30S subunit contacting proteins on the other side and probably holding the rRNA structure together. The combined cluster of proteins S8, S12 and S17 appears to hold together the shoulder and platform of the 30S subunit. This is Small ribosomal subunit protein uS12 from Mycoplasmopsis pulmonis (strain UAB CTIP) (Mycoplasma pulmonis).